The primary structure comprises 265 residues: Polyprenol monophosphomannose synthase (265 aa).

Residues 1–10 show a composition bias toward basic and acidic residues; it reads MSVPGEREQG. The disordered stretch occupies residues 1 to 21; sequence MSVPGEREQGAGEDPATVRPT.

This sequence belongs to the glycosyltransferase 2 family. Interacts with Lnt (also called Ppm2, AC A0QZ13) upon coexpression in E.coli, which increases the PPM synthase activity of this protein.

The protein resides in the cytoplasm. It catalyses the reaction a di-trans,poly-cis-dolichyl phosphate + GDP-alpha-D-mannose = a di-trans,poly-cis-dolichyl beta-D-mannosyl phosphate + GDP. In terms of biological role, transfers mannose from GDP-mannose to lipid acceptors to form polyprenol monophosphomannose (PPM); catalytic activity in vitro is enhanced by Lnt (AC A0QZ13). PMM is an alkai-stable sugar donor which adds mannose-phosphate residues to triacylated-PIM2, eventually leading to generation of the cell wall glycolipid lipoglycan modulins lipoarabinomannan (LAM) and lipomannan (LM). The polypeptide is Polyprenol monophosphomannose synthase (Mycolicibacterium smegmatis (strain ATCC 700084 / mc(2)155) (Mycobacterium smegmatis)).